A 306-amino-acid chain; its full sequence is Ribonuclease Z (306 aa).

Zn(2+)-binding residues include His-63, His-65, Asp-67, His-68, His-141, Asp-211, and His-269. Asp-67 (proton acceptor) is an active-site residue.

This sequence belongs to the RNase Z family. As to quaternary structure, homodimer. Zn(2+) serves as cofactor.

The catalysed reaction is Endonucleolytic cleavage of RNA, removing extra 3' nucleotides from tRNA precursor, generating 3' termini of tRNAs. A 3'-hydroxy group is left at the tRNA terminus and a 5'-phosphoryl group is left at the trailer molecule.. In terms of biological role, zinc phosphodiesterase, which displays some tRNA 3'-processing endonuclease activity. Probably involved in tRNA maturation, by removing a 3'-trailer from precursor tRNA. This Macrococcus caseolyticus (strain JCSC5402) (Macrococcoides caseolyticum) protein is Ribonuclease Z.